The primary structure comprises 150 residues: UPF0506 protein SJCHGC03144 (150 aa).

Residues 1–18 (MNTCIQLLILCLVTVINS) form the signal peptide. N-linked (GlcNAc...) asparagine glycosylation is found at Asn20, Asn36, Asn52, and Asn110. Disulfide bonds link Cys116–Cys130, Cys123–Cys134, and Cys129–Cys139.

The protein belongs to the UPF0506 family.

Its subcellular location is the secreted. The chain is UPF0506 protein SJCHGC03144 from Schistosoma japonicum (Blood fluke).